Here is a 594-residue protein sequence, read N- to C-terminus: Developmental and secondary metabolism regulator veA (594 aa).

The Velvet domain occupies 24–220 (GRRLFYRIDV…AEQGTRVRIR (197 aa)). The Nuclear localization signal signature appears at 38–43 (EKCRAC). Disordered stretches follow at residues 40–59 (CRAC…VDPP) and 210–558 (MAEQ…DVEE). Residues 217–229 (VRIRRDVRMRRRD) show a composition bias toward basic residues. Pro residues predominate over residues 296 to 307 (APPPPNPPPPGF). Over residues 327–351 (SHSQYQQPTSSSSSSEQVSSVPQSP) the composition is skewed to low complexity. Polar residues predominate over residues 352 to 362 (AYSSHAAQQHY). Residues 374-383 (PERRLSDHRS) show a composition bias toward basic and acidic residues. Residues 384 to 403 (SQPNNHPQQSPHQHSYSHRS) show a composition bias toward low complexity. Positions 405–416 (PQRERFMPDSRR) are enriched in basic and acidic residues. Residues 457 to 506 (VADTQATPHLPPIRWPRPNMNLPSPPSEHQEALQPLQPAPLHYESQTHQQ) form a PEST region. The segment covering 523 to 538 (YSYGYSYSHNHSHGYG) has biased composition (low complexity).

This sequence belongs to the velvet family. VeA subfamily. As to quaternary structure, component of the heterotrimeric velvet complex composed of LAEA, VEA and VELB; VEA acting as a bridging protein between LAEA and VELB.

The protein resides in the nucleus. It localises to the cytoplasm. Functionally, component of the velvet transcription factor complex that controls sexual/asexual developmental ratio in response to light, promoting sexual development in the darkness while stimulating asexual sporulation under illumination. The velvet complex acts as a global regulator for secondary metabolite gene expression. Regulates of the response to reactive oxygen species (ROS) stress. In Pyricularia oryzae (strain 70-15 / ATCC MYA-4617 / FGSC 8958) (Rice blast fungus), this protein is Developmental and secondary metabolism regulator veA.